A 689-amino-acid polypeptide reads, in one-letter code: Glycine--tRNA ligase beta subunit (689 aa).

This sequence belongs to the class-II aminoacyl-tRNA synthetase family. In terms of assembly, tetramer of two alpha and two beta subunits.

The protein localises to the cytoplasm. The enzyme catalyses tRNA(Gly) + glycine + ATP = glycyl-tRNA(Gly) + AMP + diphosphate. In Escherichia coli O8 (strain IAI1), this protein is Glycine--tRNA ligase beta subunit.